Here is a 372-residue protein sequence, read N- to C-terminus: Flagellar P-ring protein (372 aa).

An N-terminal signal peptide occupies residues 1–26 (MNLSSLPFRLLAAAVALCAIAAPASA).

It belongs to the FlgI family. As to quaternary structure, the basal body constitutes a major portion of the flagellar organelle and consists of four rings (L,P,S, and M) mounted on a central rod.

It is found in the periplasm. Its subcellular location is the bacterial flagellum basal body. Functionally, assembles around the rod to form the L-ring and probably protects the motor/basal body from shearing forces during rotation. The chain is Flagellar P-ring protein from Xanthomonas axonopodis pv. citri (strain 306).